Reading from the N-terminus, the 1258-residue chain is Regulator of G-protein signaling 22 (1258 aa).

The tract at residues 581–604 (QQLGRSEPLNAVSSKDGGLEKGSK) is disordered. 2 RGS domains span residues 845-973 (TFTD…ASRQ) and 1014-1138 (AFRK…TDEK). The disordered stretch occupies residues 1145–1172 (RRQEHKQKRKASDTEEDKAGKSGVKQYA). Residues 1154 to 1164 (KASDTEEDKAG) show a composition bias toward basic and acidic residues.

As to quaternary structure, interacts with GNA11, GNA12 and GNA13. Expressed testis, including in Leydig cells and spermatogenic cells from the spermatogonia to spermatid stages (at protein level).

It localises to the cytoplasm. The protein resides in the nucleus. In terms of biological role, inhibits signal transduction by increasing the GTPase activity of G protein alpha subunits thereby driving them into their inactive GDP-bound form. This is Regulator of G-protein signaling 22 (Rgs22) from Mus musculus (Mouse).